The primary structure comprises 62 residues: Cytotoxin 6 (62 aa).

Residues 1–2 (YT) form the signal peptide. Intrachain disulfides connect Cys5/Cys23, Cys16/Cys40, Cys44/Cys55, and Cys56/Cys61.

Belongs to the three-finger toxin family. Short-chain subfamily. Type IA cytotoxin sub-subfamily. Monomer in solution; Homodimer and oligomer in the presence of negatively charged lipids forming a pore with a size ranging between 20 and 30 Angstroms. As to expression, expressed by the venom gland.

Its subcellular location is the secreted. The protein localises to the target cell membrane. Shows cytolytic activity on many different cells by forming pore in lipid membranes. In vivo, increases heart rate or kills the animal by cardiac arrest. In addition, it binds to heparin with high affinity, interacts with Kv channel-interacting protein 1 (KCNIP1) in a calcium-independent manner, and binds to integrin alpha-V/beta-3 (ITGAV/ITGB3) with moderate affinity. This Naja sputatrix (Malayan spitting cobra) protein is Cytotoxin 6.